The following is an 879-amino-acid chain: MLKFIKSIFKTPSDRIIANLKSKIQQVHSAESSLAKLSNIELRNKTNEFKARLANNEPIDNIQYEAFAVVREAAKRTIGIQHYDEQLIGGILLHQGKVIEMSTGEGKTLVATLPSYLNALIGKGVHVVTVNDYLAQRDSDWMGTIHRFLDITVGCITSNTNEHARKIAYNSDITYITNNELGFDFLRDNMQFTNQSKVQRGCNYAIIDEIDSILIDEARTPLIISGPVSDNTSLYPIINKLITKLNKDDYEMDEKLRNVTLTDSGINKLETMLAEINILAPNSNSLYDFENMHLIHYINQSLKAHTLFRRNVDYLVKNGKVIIIDEFTGRTMDSRRYSEGLHQALEAKEKVEIQNENQTLASITFQNYFRMYTKLSGMTGTAMTEATELKEIYDLDVVTVPTHNPVQRIDYNDEIYSTKKDKYSAIIQLIQECYSKGQPVLVGTVSIEKSEELSKLLHSKKIPHNVLNAKHHDKEASIIAQAGRIKAITIATNMAGRGTDIMLGGNAEMLVDQSNLTEEEYQEKLKITKMQIEQEKEQVINAGGLFVIGTERHESRRIDNQLRGRCGRQGDPGQTKFFLSLEDDLMRIFASDRVTKILRTIGLKDGEAIHHPLINRSLATAQQKIEAQNYEIRKNLLKYDNVMNDQRKVIYEQRNEAISSDNVNEILHNLTEELIVETVHKFIPPKSYKEDWNIHELLKEYHHIFNVKLQPASIEATSSSSEVIEYLTKTALDIYKQQEQDYSAKSANEAIKHIFIKTLDQTWKEHLYTLDHLKQGISLRAYGQKDPLNEYKREAFDLFKQMLLHLKYLFIQRVARLHIDLASSPKSTSSLLETSDNNLKGKIITENSMAHKYFGKISRNQLCPCNSGKKFKHCHGALK.

ATP contacts are provided by residues Gln-86, 104 to 108 (GEGKT), and Asp-500. Residues Cys-863, Cys-865, Cys-874, and His-875 each coordinate Zn(2+).

It belongs to the SecA family. In terms of assembly, monomer and homodimer. Part of the essential Sec protein translocation apparatus which comprises SecA, SecYEG and auxiliary proteins SecDF-YajC and YidC. It depends on Zn(2+) as a cofactor.

It localises to the cell inner membrane. The protein localises to the cytoplasm. It carries out the reaction ATP + H2O + cellular proteinSide 1 = ADP + phosphate + cellular proteinSide 2.. Its function is as follows. Part of the Sec protein translocase complex. Interacts with the SecYEG preprotein conducting channel. Has a central role in coupling the hydrolysis of ATP to the transfer of proteins into and across the cell membrane, serving both as a receptor for the preprotein-SecB complex and as an ATP-driven molecular motor driving the stepwise translocation of polypeptide chains across the membrane. This chain is Protein translocase subunit SecA, found in Orientia tsutsugamushi (strain Ikeda) (Rickettsia tsutsugamushi).